Reading from the N-terminus, the 141-residue chain is Nucleoside diphosphate kinase (141 aa).

The ATP site is built by lysine 11, phenylalanine 59, arginine 87, threonine 93, arginine 104, and asparagine 114. Histidine 117 (pros-phosphohistidine intermediate) is an active-site residue.

It belongs to the NDK family. In terms of assembly, homotetramer. Requires Mg(2+) as cofactor.

It is found in the cytoplasm. The catalysed reaction is a 2'-deoxyribonucleoside 5'-diphosphate + ATP = a 2'-deoxyribonucleoside 5'-triphosphate + ADP. The enzyme catalyses a ribonucleoside 5'-diphosphate + ATP = a ribonucleoside 5'-triphosphate + ADP. Functionally, major role in the synthesis of nucleoside triphosphates other than ATP. The ATP gamma phosphate is transferred to the NDP beta phosphate via a ping-pong mechanism, using a phosphorylated active-site intermediate. The polypeptide is Nucleoside diphosphate kinase (Hamiltonella defensa subsp. Acyrthosiphon pisum (strain 5AT)).